The chain runs to 231 residues: L-ribulose-5-phosphate 4-epimerase (231 aa).

Substrate-binding positions include 27-28 (GN), 44-45 (SG), and 74-75 (SS). The Zn(2+) site is built by Asp-76, His-95, and His-97. Asp-120 serves as the catalytic Proton donor/acceptor. His-171 contacts Zn(2+). Tyr-229 acts as the Proton donor/acceptor in catalysis.

It belongs to the aldolase class II family. AraD/FucA subfamily. In terms of assembly, homotetramer. Zn(2+) serves as cofactor.

The enzyme catalyses L-ribulose 5-phosphate = D-xylulose 5-phosphate. It participates in carbohydrate degradation; L-arabinose degradation via L-ribulose; D-xylulose 5-phosphate from L-arabinose (bacterial route): step 3/3. In terms of biological role, involved in the degradation of L-arabinose. Catalyzes the interconversion of L-ribulose 5-phosphate (LRu5P) and D-xylulose 5-phosphate (D-Xu5P) via a retroaldol/aldol mechanism (carbon-carbon bond cleavage analogous to a class II aldolase reaction). In Salmonella typhimurium (strain LT2 / SGSC1412 / ATCC 700720), this protein is L-ribulose-5-phosphate 4-epimerase.